We begin with the raw amino-acid sequence, 426 residues long: Histidine--tRNA ligase (426 aa).

Belongs to the class-II aminoacyl-tRNA synthetase family.

Its subcellular location is the cytoplasm. It carries out the reaction tRNA(His) + L-histidine + ATP = L-histidyl-tRNA(His) + AMP + diphosphate + H(+). The chain is Histidine--tRNA ligase from Saccharolobus islandicus (strain L.S.2.15 / Lassen #1) (Sulfolobus islandicus).